A 390-amino-acid polypeptide reads, in one-letter code: Bifunctional enzyme IspD/IspF (390 aa).

Positions 1-229 (MAAGRGERAG…RQDHAVFPDI (229 aa)) are 2-C-methyl-D-erythritol 4-phosphate cytidylyltransferase. Residues 230–390 (RTGNGYDVHS…TVIYPGEVPE (161 aa)) are 2-C-methyl-D-erythritol 2,4-cyclodiphosphate synthase. 2 residues coordinate a divalent metal cation: Asp236 and His238. 4-CDP-2-C-methyl-D-erythritol 2-phosphate-binding positions include 236–238 (DVH) and 262–263 (HS). Residue His270 coordinates a divalent metal cation. Residues 284 to 286 (DIG), 360 to 363 (TTNE), Phe367, and Arg370 contribute to the 4-CDP-2-C-methyl-D-erythritol 2-phosphate site.

This sequence in the N-terminal section; belongs to the IspD/TarI cytidylyltransferase family. IspD subfamily. It in the C-terminal section; belongs to the IspF family. Requires a divalent metal cation as cofactor.

The catalysed reaction is 2-C-methyl-D-erythritol 4-phosphate + CTP + H(+) = 4-CDP-2-C-methyl-D-erythritol + diphosphate. It carries out the reaction 4-CDP-2-C-methyl-D-erythritol 2-phosphate = 2-C-methyl-D-erythritol 2,4-cyclic diphosphate + CMP. It functions in the pathway isoprenoid biosynthesis; isopentenyl diphosphate biosynthesis via DXP pathway; isopentenyl diphosphate from 1-deoxy-D-xylulose 5-phosphate: step 2/6. The protein operates within isoprenoid biosynthesis; isopentenyl diphosphate biosynthesis via DXP pathway; isopentenyl diphosphate from 1-deoxy-D-xylulose 5-phosphate: step 4/6. In terms of biological role, bifunctional enzyme that catalyzes the formation of 4-diphosphocytidyl-2-C-methyl-D-erythritol from CTP and 2-C-methyl-D-erythritol 4-phosphate (MEP) (IspD), and catalyzes the conversion of 4-diphosphocytidyl-2-C-methyl-D-erythritol 2-phosphate (CDP-ME2P) to 2-C-methyl-D-erythritol 2,4-cyclodiphosphate (ME-CPP) with a corresponding release of cytidine 5-monophosphate (CMP) (IspF). In Brucella suis biovar 1 (strain 1330), this protein is Bifunctional enzyme IspD/IspF.